Reading from the N-terminus, the 426-residue chain is 3-phosphoshikimate 1-carboxyvinyltransferase (426 aa).

Positions 22, 23, and 27 each coordinate 3-phosphoshikimate. Residue lysine 22 participates in phosphoenolpyruvate binding. The phosphoenolpyruvate site is built by glycine 96 and arginine 124. 3-phosphoshikimate contacts are provided by serine 170, serine 171, glutamine 172, serine 198, aspartate 314, asparagine 337, and lysine 341. Position 172 (glutamine 172) interacts with phosphoenolpyruvate. Aspartate 314 serves as the catalytic Proton acceptor. Arginine 345, arginine 387, and lysine 412 together coordinate phosphoenolpyruvate.

This sequence belongs to the EPSP synthase family. As to quaternary structure, monomer.

It localises to the cytoplasm. It carries out the reaction 3-phosphoshikimate + phosphoenolpyruvate = 5-O-(1-carboxyvinyl)-3-phosphoshikimate + phosphate. It participates in metabolic intermediate biosynthesis; chorismate biosynthesis; chorismate from D-erythrose 4-phosphate and phosphoenolpyruvate: step 6/7. In terms of biological role, catalyzes the transfer of the enolpyruvyl moiety of phosphoenolpyruvate (PEP) to the 5-hydroxyl of shikimate-3-phosphate (S3P) to produce enolpyruvyl shikimate-3-phosphate and inorganic phosphate. The chain is 3-phosphoshikimate 1-carboxyvinyltransferase from Aliivibrio fischeri (strain ATCC 700601 / ES114) (Vibrio fischeri).